A 434-amino-acid chain; its full sequence is Enolase (434 aa).

Residues H158 and E167 each contribute to the substrate site. The Proton donor role is filled by E210. The Mg(2+) site is built by D245, E294, and D319. 2 residues coordinate substrate: E294 and D319. K344 acts as the Proton acceptor in catalysis. Substrate-binding positions include 371 to 374 (SHRS) and K395.

Belongs to the enolase family. In terms of assembly, homodimer. It depends on Mg(2+) as a cofactor.

It is found in the cytoplasm. It carries out the reaction (2R)-2-phosphoglycerate = phosphoenolpyruvate + H2O. It functions in the pathway carbohydrate degradation; glycolysis; pyruvate from D-glyceraldehyde 3-phosphate: step 4/5. The sequence is that of Enolase from Caenorhabditis elegans.